A 729-amino-acid chain; its full sequence is Fatty acid oxidation complex subunit alpha (729 aa).

Residues 1–189 (MLYKGDTLYL…KIGLVDGVVK (189 aa)) form an enoyl-CoA hydratase/isomerase region. D296 lines the substrate pocket. The tract at residues 311-729 (ETPKQAAVLG…ARPVGDLKTA (419 aa)) is 3-hydroxyacyl-CoA dehydrogenase. Residues M324, D343, 400–402 (VVE), K407, and S429 each bind NAD(+). H450 serves as the catalytic For 3-hydroxyacyl-CoA dehydrogenase activity. N453 contributes to the NAD(+) binding site. The substrate site is built by N500 and Y660. The tract at residues 708-729 (RHNEPYYPPVEPARPVGDLKTA) is disordered.

The protein in the N-terminal section; belongs to the enoyl-CoA hydratase/isomerase family. It in the C-terminal section; belongs to the 3-hydroxyacyl-CoA dehydrogenase family. In terms of assembly, heterotetramer of two alpha chains (FadB) and two beta chains (FadA).

The catalysed reaction is a (3S)-3-hydroxyacyl-CoA + NAD(+) = a 3-oxoacyl-CoA + NADH + H(+). It catalyses the reaction a (3S)-3-hydroxyacyl-CoA = a (2E)-enoyl-CoA + H2O. It carries out the reaction a 4-saturated-(3S)-3-hydroxyacyl-CoA = a (3E)-enoyl-CoA + H2O. The enzyme catalyses (3S)-3-hydroxybutanoyl-CoA = (3R)-3-hydroxybutanoyl-CoA. The catalysed reaction is a (3Z)-enoyl-CoA = a 4-saturated (2E)-enoyl-CoA. It catalyses the reaction a (3E)-enoyl-CoA = a 4-saturated (2E)-enoyl-CoA. It functions in the pathway lipid metabolism; fatty acid beta-oxidation. Its function is as follows. Involved in the aerobic and anaerobic degradation of long-chain fatty acids via beta-oxidation cycle. Catalyzes the formation of 3-oxoacyl-CoA from enoyl-CoA via L-3-hydroxyacyl-CoA. It can also use D-3-hydroxyacyl-CoA and cis-3-enoyl-CoA as substrate. This is Fatty acid oxidation complex subunit alpha from Escherichia coli O139:H28 (strain E24377A / ETEC).